Consider the following 152-residue polypeptide: UPF0178 protein SaurJH9_0705 (152 aa).

This sequence belongs to the UPF0178 family.

The sequence is that of UPF0178 protein SaurJH9_0705 from Staphylococcus aureus (strain JH9).